The sequence spans 955 residues: Leucine--tRNA ligase (955 aa).

The 'HIGH' region signature appears at 51-61; sequence PYLNGVLHAGH. Positions 647 to 651 match the 'KMSKS' region motif; sequence KLSKS. Lysine 650 lines the ATP pocket.

This sequence belongs to the class-I aminoacyl-tRNA synthetase family.

Its subcellular location is the cytoplasm. The enzyme catalyses tRNA(Leu) + L-leucine + ATP = L-leucyl-tRNA(Leu) + AMP + diphosphate. The chain is Leucine--tRNA ligase from Methanococcus maripaludis (strain C7 / ATCC BAA-1331).